The chain runs to 367 residues: Phosphoglycerate kinase (367 aa).

13 residues coordinate (2R)-3-phosphoglycerate: V1, D2, F3, N4, R17, S40, H41, G43, R44, L98, R99, H146, and R147. G190 is an ADP binding site. CDP is bound at residue G190. AMP contacts are provided by A191 and K192. A191 serves as a coordination point for ATP. Mg(2+) is bound at residue A191. Mg(2+) is bound by residues A194 and D195. A CDP-binding site is contributed by D195. AMP is bound at residue K196. An ATP-binding site is contributed by K196. ADP is bound at residue G214. G214 is a CDP binding site. AMP is bound by residues G215 and G289. The ATP site is built by G215 and G289. 2 residues coordinate CDP: G314 and F319. Residue F319 participates in ADP binding. E320 contributes to the AMP binding site. Positions 320, 351, and 352 each coordinate ATP. D351 provides a ligand contact to Mg(2+).

It belongs to the phosphoglycerate kinase family. In terms of assembly, monomer. Requires Mg(2+) as cofactor.

The catalysed reaction is (2R)-3-phosphoglycerate + ATP = (2R)-3-phospho-glyceroyl phosphate + ADP. It functions in the pathway carbohydrate degradation; glycolysis; pyruvate from D-glyceraldehyde 3-phosphate: step 2/5. This Paramecium primaurelia protein is Phosphoglycerate kinase (PGK).